Here is a 300-residue protein sequence, read N- to C-terminus: MLSNFKKEKMNTSTTFYEIICTLEKYWHNQNCTIIEPLDISVGAGTFHNKTFFGTIGSKPISMAYVQSSRRPSDGRYGKNPNRLQHYYQFQVIIKPSPHNIQCLYLNSLKKLNIDCKTNDIRFVEDNWENPTLGAWGQGWEVWLNGMEVTQFTYFQQVGGINCNPITTEITYGLERIAMHIQNKSNIYDVIWNQDMNNNIITYGDLFLNNEIEHSSYNFKYADSKLHFDLFEKHLQESNRIMKLFNNLLFPAYEHLIYSIHYFNLLDAKKKFSTTQRQTHILNIRNTSKMIATNYYKKQK.

The protein belongs to the class-II aminoacyl-tRNA synthetase family. In terms of assembly, tetramer of two alpha and two beta subunits.

Its subcellular location is the cytoplasm. It carries out the reaction tRNA(Gly) + glycine + ATP = glycyl-tRNA(Gly) + AMP + diphosphate. The protein is Glycine--tRNA ligase alpha subunit (glyQ) of Buchnera aphidicola subsp. Baizongia pistaciae (strain Bp).